The chain runs to 71 residues: DNA-directed RNA polymerase subunit omega (71 aa).

This sequence belongs to the RNA polymerase subunit omega family. In terms of assembly, the RNAP catalytic core consists of 2 alpha, 1 beta, 1 beta' and 1 omega subunit. When a sigma factor is associated with the core the holoenzyme is formed, which can initiate transcription.

It carries out the reaction RNA(n) + a ribonucleoside 5'-triphosphate = RNA(n+1) + diphosphate. Promotes RNA polymerase assembly. Latches the N- and C-terminal regions of the beta' subunit thereby facilitating its interaction with the beta and alpha subunits. The protein is DNA-directed RNA polymerase subunit omega of Aromatoleum aromaticum (strain DSM 19018 / LMG 30748 / EbN1) (Azoarcus sp. (strain EbN1)).